A 365-amino-acid chain; its full sequence is Glycine oxidase (365 aa).

FAD contacts are provided by residues 12–13 (VI), 32–33 (DQ), 40–41 (SS), 45–47 (GGI), and I173. R302 lines the substrate pocket. Residue 327-333 (HYRNGLV) participates in FAD binding.

This sequence belongs to the DAO family. ThiO subfamily. In terms of assembly, monomer. It depends on FAD as a cofactor.

It catalyses the reaction glycine + O2 + H2O = glyoxylate + H2O2 + NH4(+). The enzyme catalyses sarcosine + O2 + H2O = methylamine + glyoxylate + H2O2. It participates in cofactor biosynthesis; thiamine diphosphate biosynthesis. Functionally, catalyzes the oxidation of glycine, leading to glyoxyl imine and hydrogen peroxide as primary products; glyoxyl imine is used for the biosynthesis of the thiazole ring of thiamine. Otherwise, glyoxyl imine is spontaneously hydrolyzed in water to produce glyoxylate and ammonia. Can also use sarcosine (N-methylglycine) as substrate, and, to a lesser extent, N-ethylglycine and D-proline. Has no activity towards other amino-acids D-Asp, D-Glu, D-Gln, D-His, D-Leu, D-Lys, D-ornithine, D-Trp, D-Val, L-Ala, L-Asp, L-Glu, L-His, L-Leu, L-Lys, L-Met and L-Pro. In Pseudomonas putida (strain ATCC 47054 / DSM 6125 / CFBP 8728 / NCIMB 11950 / KT2440), this protein is Glycine oxidase.